We begin with the raw amino-acid sequence, 185 residues long: Large ribosomal subunit protein uL5 (185 aa).

Belongs to the universal ribosomal protein uL5 family. Part of the 50S ribosomal subunit; part of the 5S rRNA/L5/L18/L25 subcomplex. Contacts the 5S rRNA and the P site tRNA. Forms a bridge to the 30S subunit in the 70S ribosome.

Its function is as follows. This is one of the proteins that bind and probably mediate the attachment of the 5S RNA into the large ribosomal subunit, where it forms part of the central protuberance. In the 70S ribosome it contacts protein S13 of the 30S subunit (bridge B1b), connecting the 2 subunits; this bridge is implicated in subunit movement. Contacts the P site tRNA; the 5S rRNA and some of its associated proteins might help stabilize positioning of ribosome-bound tRNAs. This chain is Large ribosomal subunit protein uL5, found in Streptomyces avermitilis (strain ATCC 31267 / DSM 46492 / JCM 5070 / NBRC 14893 / NCIMB 12804 / NRRL 8165 / MA-4680).